A 284-amino-acid chain; its full sequence is Tropomyosin alpha-1 chain (284 aa).

Methionine 1 is modified (N-acetylmethionine). The disordered stretch occupies residues 1-38 (MDAIKKKMQMLKLDKENALDRAEQAEADKKAAEDRSKQ). The stretch at 1–284 (MDAIKKKMQM…DHALNDMTSI (284 aa)) forms a coiled coil. The segment covering 12-38 (KLDKENALDRAEQAEADKKAAEDRSKQ) has biased composition (basic and acidic residues). Serine 45 carries the post-translational modification Phosphoserine. Residues 116–136 (AEKAADESERGMKVIESRAQK) are disordered. A phosphoserine mark is found at serine 174, serine 186, serine 206, and serine 252. Tyrosine 261 is modified (phosphotyrosine). 2 positions are modified to phosphoserine: serine 271 and serine 283.

Belongs to the tropomyosin family. Homodimer. Heterodimer of an alpha (TPM1, TPM3 or TPM4) and a beta (TPM2) chain. Interacts with HRG (via the HRR domain); the interaction contributes to the antiangiogenic properties of the histidine/proline-rich region (HRR) of HRG. Interacts (via N-terminus) with LMOD2 (via N-terminus) and TMOD1 (via N-terminus). Post-translationally, phosphorylated at Ser-283 by DAPK1 in response to oxidative stress and this phosphorylation enhances stress fiber formation in endothelial cells.

The protein resides in the cytoplasm. Its subcellular location is the cytoskeleton. Functionally, binds to actin filaments in muscle and non-muscle cells. Plays a central role, in association with the troponin complex, in the calcium dependent regulation of vertebrate striated muscle contraction. Smooth muscle contraction is regulated by interaction with caldesmon. In non-muscle cells is implicated in stabilizing cytoskeleton actin filaments. The chain is Tropomyosin alpha-1 chain (Tpm1) from Mus musculus (Mouse).